Here is a 363-residue protein sequence, read N- to C-terminus: Peptide chain release factor 2 (363 aa).

An N5-methylglutamine modification is found at glutamine 251.

The protein belongs to the prokaryotic/mitochondrial release factor family. Methylated by PrmC. Methylation increases the termination efficiency of RF2.

The protein localises to the cytoplasm. In terms of biological role, peptide chain release factor 2 directs the termination of translation in response to the peptide chain termination codons UGA and UAA. The protein is Peptide chain release factor 2 of Helicobacter acinonychis (strain Sheeba).